Consider the following 185-residue polypeptide: Elongation factor P (185 aa).

This sequence belongs to the elongation factor P family.

Its subcellular location is the cytoplasm. It participates in protein biosynthesis; polypeptide chain elongation. Involved in peptide bond synthesis. Stimulates efficient translation and peptide-bond synthesis on native or reconstituted 70S ribosomes in vitro. Probably functions indirectly by altering the affinity of the ribosome for aminoacyl-tRNA, thus increasing their reactivity as acceptors for peptidyl transferase. In Streptococcus equi subsp. zooepidemicus (strain MGCS10565), this protein is Elongation factor P.